Here is a 1055-residue protein sequence, read N- to C-terminus: Ephrin type-B receptor 2 (1055 aa).

The first 18 residues, 1–18 (MALRRLGAALLLLPLLAA), serve as a signal peptide directing secretion. Residues 19-543 (VEETLMDSTT…QTSIQEKLPL (525 aa)) lie on the Extracellular side of the membrane. Residues 20–202 (EETLMDSTTA…FYRKCPRIIQ (183 aa)) enclose the Eph LBD domain. 2 disulfides stabilise this stretch: cysteine 62-cysteine 184 and cysteine 97-cysteine 107. N-linked (GlcNAc...) asparagine glycosylation is found at asparagine 265, asparagine 336, asparagine 428, and asparagine 482. Fibronectin type-III domains are found at residues 324-434 (IPSA…TNQA) and 435-530 (APSA…TMTE). Residues 544–564 (IIGSSAAGLVFLIAVVVIAIV) form a helical membrane-spanning segment. At 565–1055 (CNRRGFERAD…KESNDCSCGG (491 aa)) the chain is on the cytoplasmic side. The 264-residue stretch at 621 to 884 (VKIEQVIGAG…QIVNTLDKMI (264 aa)) folds into the Protein kinase domain. ATP-binding positions include 627–635 (IGAGEFGEV) and lysine 653. Aspartate 746 serves as the catalytic Proton acceptor. A Glycyl lysine isopeptide (Lys-Gly) (interchain with G-Cter in ubiquitin) cross-link involves residue lysine 891. The region spanning 913 to 977 (TSFNTVDEWL…LNSIQVMRAQ (65 aa)) is the SAM domain. Phosphoserine occurs at positions 983 and 984. The short motif at 984 to 986 (VEG) is the PDZ-binding (in isoform 2) element. The interval 990–1055 (ARRPRATGRT…KESNDCSCGG (66 aa)) is disordered. Residues 991–1002 (RRPRATGRTKRC) show a composition bias toward basic residues. The span at 1025–1049 (KKTDPGRGREIQGIFFKEDSHKESN) shows a compositional bias: basic and acidic residues.

It belongs to the protein kinase superfamily. Tyr protein kinase family. Ephrin receptor subfamily. Heterotetramer upon binding of the ligand. The heterotetramer is composed of an ephrin dimer and a receptor dimer. Interacts (via PDZ-binding motif) with GRIP1 and PICK1 (via PDZ domain). Interacts with ARHGEF15; mediates ARHGEF15 phosphorylation, ubiquitination and degradation by the proteasome. Interacts with AQP1; involved in endolymph production in the inner ear. Interacts with SPSB1 and SPSB4. The phosphorylated form interacts with RASA1 (via SH2 domain 1). Interacts with EFNA5. Interacts with SH2D3C. Post-translationally, autophosphorylated; ligand binding stimulates autophosphorylation on tyrosine residues. Polyubiquitinated; ligand binding stimulates ubiquitination. Ubiquitinated by RNF186 at Lys-891, mainly through 'Lys-27'-linked polyubiquitin chains. Ubiquitinated by CRL2(KLHDC2) E3 ligase complex. In terms of processing, ligand binding induces cleavage by matrix metalloproteinases (MMPs) such as MMP7/MMP9, producing an EphB2/N-terminal fragment (NTF) and a C-terminal long fragment (EphB2-LF). EphB2-LF is further cleaved by MMPs, producing EphB2/CTF1 which is further cleaved by the PS1/gamma-secretase producing EphB2/CTF2. In terms of tissue distribution, brain, heart, lung, kidney, placenta, pancreas, liver and skeletal muscle. Preferentially expressed in fetal brain.

It is found in the cell membrane. Its subcellular location is the cell projection. The protein localises to the axon. It localises to the dendrite. The enzyme catalyses L-tyrosyl-[protein] + ATP = O-phospho-L-tyrosyl-[protein] + ADP + H(+). In terms of biological role, receptor tyrosine kinase which binds promiscuously transmembrane ephrin-B family ligands residing on adjacent cells, leading to contact-dependent bidirectional signaling into neighboring cells. The signaling pathway downstream of the receptor is referred to as forward signaling while the signaling pathway downstream of the ephrin ligand is referred to as reverse signaling. Functions in axon guidance during development. Involved in the guidance of commissural axons, that form a major interhemispheric connection between the 2 temporal lobes of the cerebral cortex. Also involved in guidance of contralateral inner ear efferent growth cones at the midline and of retinal ganglion cell axons to the optic disk. In addition to axon guidance, also regulates dendritic spines development and maturation and stimulates the formation of excitatory synapses. Upon activation by EFNB1, abolishes the ARHGEF15-mediated negative regulation on excitatory synapse formation. Controls other aspects of development including angiogenesis, palate development and in inner ear development through regulation of endolymph production. Forward and reverse signaling through the EFNB2/EPHB2 complex regulate movement and adhesion of cells that tubularize the urethra and septate the cloaca. May function as a tumor suppressor. May be involved in the regulation of platelet activation and blood coagulation. The polypeptide is Ephrin type-B receptor 2 (EPHB2) (Homo sapiens (Human)).